The following is a 992-amino-acid chain: Disks large-associated protein 4 (992 aa).

Positions 1–20 (MKGLGDSRPRHLSDSLDPPH) are enriched in basic and acidic residues. 3 disordered regions span residues 1 to 30 (MKGL…TDRN), 47 to 66 (PGQN…QLPP), and 157 to 206 (LEGT…GWWS). Positions 162-171 (GKVGGNGSKK) are enriched in gly residues. Residues 172–194 (GGMEDGKGRRAKSKERAKAGEPK) are compositionally biased toward basic and acidic residues. Ser-206 and Ser-207 each carry phosphoserine. Omega-N-methylarginine is present on Arg-291. Residues 342–396 (STTLLSPRETDAAAEGPIPCRRMRSGSYIKAMGDEDSDESGGSPKPSPKTAARRQ) are disordered. Residues Ser-378, Ser-381, Ser-388, Ser-405, Ser-415, and Ser-421 each carry the phosphoserine modification. Disordered stretches follow at residues 527–751 (SVSL…GPRQ), 763–798 (SYGD…AQPG), and 915–992 (TPEK…QTRL). A compositionally biased stretch (low complexity) spans 528–554 (VSLQSLSPPPSTGSLSNSRTLPSSSCL). The segment covering 576–591 (VTVQSSTESAQDTYLD) has biased composition (polar residues). Ser-580, Ser-581, Ser-609, Ser-611, Ser-665, and Ser-744 each carry phosphoserine. Residues 600–620 (TSQSGLSNSSDSLDSSTRPPS) show a composition bias toward low complexity. Thr-915 is subject to Phosphothreonine. Composition is skewed to basic and acidic residues over residues 915-925 (TPEKRKEEKKP) and 940-958 (VSRD…EARK). Residues 969 to 978 (VRQNSATESA) show a composition bias toward polar residues. Ser-973 carries the phosphoserine modification.

The protein belongs to the SAPAP family. As to quaternary structure, interacts with DLG1 and DLG4/PSD-95.

The protein localises to the membrane. Its function is as follows. May play a role in the molecular organization of synapses and neuronal cell signaling. Could be an adapter protein linking ion channel to the subsynaptic cytoskeleton. May induce enrichment of PSD-95/SAP90 at the plasma membrane. The polypeptide is Disks large-associated protein 4 (DLGAP4) (Homo sapiens (Human)).